A 325-amino-acid polypeptide reads, in one-letter code: Acetyl-coenzyme A carboxylase carboxyl transferase subunit alpha (325 aa).

In terms of domain architecture, CoA carboxyltransferase C-terminal spans 43 to 297; the sequence is ELENNSTQLR…KTSLIAHLRQ (255 aa).

This sequence belongs to the AccA family. As to quaternary structure, acetyl-CoA carboxylase is a heterohexamer composed of biotin carboxyl carrier protein (AccB), biotin carboxylase (AccC) and two subunits each of ACCase subunit alpha (AccA) and ACCase subunit beta (AccD).

The protein resides in the cytoplasm. The enzyme catalyses N(6)-carboxybiotinyl-L-lysyl-[protein] + acetyl-CoA = N(6)-biotinyl-L-lysyl-[protein] + malonyl-CoA. The protein operates within lipid metabolism; malonyl-CoA biosynthesis; malonyl-CoA from acetyl-CoA: step 1/1. Its function is as follows. Component of the acetyl coenzyme A carboxylase (ACC) complex. First, biotin carboxylase catalyzes the carboxylation of biotin on its carrier protein (BCCP) and then the CO(2) group is transferred by the carboxyltransferase to acetyl-CoA to form malonyl-CoA. This is Acetyl-coenzyme A carboxylase carboxyl transferase subunit alpha from Cyanothece sp. (strain PCC 7425 / ATCC 29141).